The following is a 290-amino-acid chain: MRIAFLVDSVSNLKEDKNSHLYVLPLYIIETIAEHQETFKSGFNIDLKTLTDKMINAPKGVKFSTSQTSEEEVRDKVKSIINDYDLIIGIPIDKEISTSYLNWKIVEKEFEDKFHVLDSRIVEVLIAWLISDIKVWLKNNQYSRAGLDEFVYNFRNKCGAILFVTDTKPLVAGGRLSNLKSFIIKSFKFHLLISFLGETGKLQFFNKAQSASSAHKLAVQFLEKKLLKKEVNFRRAALLTTMFETDKNQLIKQEFVTLLNNAVDVSEHLLSPVICTHTGINSYAFLIQTE.

The 287-residue stretch at 3–289 (IAFLVDSVSN…INSYAFLIQT (287 aa)) folds into the DegV domain. Residues Thr65 and Ser97 each coordinate hexadecanoate.

Functionally, may bind long-chain fatty acids, such as palmitate, and may play a role in lipid transport or fatty acid metabolism. The sequence is that of DegV domain-containing protein MG450 from Mycoplasma genitalium (strain ATCC 33530 / DSM 19775 / NCTC 10195 / G37) (Mycoplasmoides genitalium).